We begin with the raw amino-acid sequence, 397 residues long: Phosphoglycerate kinase (397 aa).

Residues 21-23 (DFN), Arg37, 60-63 (HLGR), Arg120, and Arg153 contribute to the substrate site. Residues Lys206, Gly296, Glu327, and 353 to 356 (GGDS) contribute to the ATP site.

Belongs to the phosphoglycerate kinase family. As to quaternary structure, monomer.

It is found in the cytoplasm. The enzyme catalyses (2R)-3-phosphoglycerate + ATP = (2R)-3-phospho-glyceroyl phosphate + ADP. It functions in the pathway carbohydrate degradation; glycolysis; pyruvate from D-glyceraldehyde 3-phosphate: step 2/5. This Rhodopirellula baltica (strain DSM 10527 / NCIMB 13988 / SH1) protein is Phosphoglycerate kinase.